The primary structure comprises 635 residues: MNLGIVSLFREHVDSIPNILPHQLATLDFLLRSILDENNSVLLFHIMGSGKTIIALLFALIVSKFKKVYILVPNINILKIFTYNMGIAVNLINSDYVLENIHIYSTTSFYSLNYNDNVINYNGLAKYNNAIFIIDEAHNIFGNNTGELMTVIKNKNKVPFLLLSGSPITNTPITLSNIISIMSDEGINFSDIIIQGKKVFQILLNENGVSVLKRILRDKISYYELQDTELPSIVFHGRRFLDTRIVYCHMSKLQERDYINVRKLCNNEMFEKNMNNVSLAVLGPLNLINNLDILFQDQDKELYPNLKISNGVLYGDELVSLNISSKFKYFIARIQSLTGKHFIYFSNSTYGGLIIKYIMLSNGYSEHNGSQGTNPKTIGGRLKTFAIVTSKMKSSLEELLAVYNSPANNDGSRIMFLFSSNIMSESYTLKEVMHIWFMTIPDTFSQYNQILGRSIRKFSYTNIAEPVNVYLLAAIYADFDDDITSLDNYSIDEINVLPFDIKKLLYLKFKTKETKRIYSILKDISVNYTLPPHPQIVDVVLGELTRQFFYHHSRVRADDPELFAAIDRVLCSPDSTRRYLDEITRGHFFVCNRVFEKALLYRHGEDIIVVPFKLSHDQFLWAINFRKEYNVGAPL.

Positions 32–185 (RSILDENNSV…SNIISIMSDE (154 aa)) constitute a Helicase ATP-binding domain. 45–52 (HIMGSGKT) lines the ATP pocket. The short motif at 135-138 (DEAH) is the DEXH box element.

Belongs to the helicase family. VETF subfamily. As to quaternary structure, heterodimer of a 70 kDa and a 82 kDa subunit. Part of the early transcription complex composed of ETF, RAP94, and the DNA-directed RNA polymerase.

It localises to the virion. Functionally, acts with RNA polymerase to initiate transcription from early gene promoters. Is recruited by the RPO-associated protein of 94 kDa (RAP94) to form the early transcription complex, which also contains the core RNA polymerase. ETF heterodimer binds to early gene promoters. The sequence is that of Early transcription factor 70 kDa subunit (VETFS) from Homo sapiens (Human).